The following is a 60-amino-acid chain: Large ribosomal subunit protein uL30 (60 aa).

This sequence belongs to the universal ribosomal protein uL30 family. Part of the 50S ribosomal subunit.

This chain is Large ribosomal subunit protein uL30, found in Streptomyces avermitilis (strain ATCC 31267 / DSM 46492 / JCM 5070 / NBRC 14893 / NCIMB 12804 / NRRL 8165 / MA-4680).